The following is a 153-amino-acid chain: Glucose-6-phosphate 1-dehydrogenase (153 aa).

NADP(+) is bound by residues Arg-21 and Lys-120. Position 120 (Lys-120) interacts with D-glucose 6-phosphate.

This sequence belongs to the glucose-6-phosphate dehydrogenase family.

The protein localises to the cytoplasm. It localises to the cytosol. The enzyme catalyses D-glucose 6-phosphate + NADP(+) = 6-phospho-D-glucono-1,5-lactone + NADPH + H(+). It participates in carbohydrate degradation; pentose phosphate pathway; D-ribulose 5-phosphate from D-glucose 6-phosphate (oxidative stage): step 1/3. Functionally, cytosolic glucose-6-phosphate dehydrogenase that catalyzes the first and rate-limiting step of the oxidative branch within the pentose phosphate pathway/shunt, an alternative route to glycolysis for the dissimilation of carbohydrates and a major source of reducing power and metabolic intermediates for fatty acid and nucleic acid biosynthetic processes. In Culex pipiens (House mosquito), this protein is Glucose-6-phosphate 1-dehydrogenase (ZW).